The following is a 451-amino-acid chain: Trigger factor (451 aa).

The region spanning 165-250 (DDKLTIDFEG…LHQIQAREVL (86 aa)) is the PPIase FKBP-type domain.

Belongs to the FKBP-type PPIase family. Tig subfamily.

The protein localises to the cytoplasm. The enzyme catalyses [protein]-peptidylproline (omega=180) = [protein]-peptidylproline (omega=0). Functionally, involved in protein export. Acts as a chaperone by maintaining the newly synthesized protein in an open conformation. Functions as a peptidyl-prolyl cis-trans isomerase. The protein is Trigger factor of Helicobacter acinonychis (strain Sheeba).